We begin with the raw amino-acid sequence, 155 residues long: Ribosomal RNA large subunit methyltransferase H (155 aa).

S-adenosyl-L-methionine contacts are provided by residues Leu72, Gly103, and 122-127; that span reads LSDLTL.

Belongs to the RNA methyltransferase RlmH family. In terms of assembly, homodimer.

It is found in the cytoplasm. It catalyses the reaction pseudouridine(1915) in 23S rRNA + S-adenosyl-L-methionine = N(3)-methylpseudouridine(1915) in 23S rRNA + S-adenosyl-L-homocysteine + H(+). Specifically methylates the pseudouridine at position 1915 (m3Psi1915) in 23S rRNA. The chain is Ribosomal RNA large subunit methyltransferase H from Albidiferax ferrireducens (strain ATCC BAA-621 / DSM 15236 / T118) (Rhodoferax ferrireducens).